Here is a 176-residue protein sequence, read N- to C-terminus: HTH-type transcriptional regulator DctR (176 aa).

Positions Val-109 to Tyr-174 constitute an HTH luxR-type domain. Residues Thr-133–His-152 constitute a DNA-binding region (H-T-H motif).

In terms of biological role, may act as a transcriptional regulator of dctA. Could be involved in the regulation of the genes coding for the type III secretion system in enterohaemorragic strains. In Escherichia coli O157:H7, this protein is HTH-type transcriptional regulator DctR (dctR).